The primary structure comprises 385 residues: Lysine 6-dehydrogenase (385 aa).

The protein belongs to the saccharopine dehydrogenase family. As to quaternary structure, homohexamer.

The catalysed reaction is L-lysine + NAD(+) = L-1-piperideine-6-carboxylate + NH4(+) + NADH + 2 H(+). Catalyzes the oxidative deamination of L-lysine in the presence of NAD. Can also use (S)-(2-aminoethyl)-L-cysteine as a substrate, but more slowly. Can use both NAD and NADP but the preferred substrate is NAD. The sequence is that of Lysine 6-dehydrogenase (lysDH) from Geobacillus stearothermophilus (Bacillus stearothermophilus).